The following is a 186-amino-acid chain: dCTP deaminase (186 aa).

Residue 107-112 coordinates dCTP; the sequence is KSSYAR. E133 (proton donor/acceptor) is an active-site residue. 3 residues coordinate dCTP: Q152, Y166, and Q176.

It belongs to the dCTP deaminase family. As to quaternary structure, homotrimer.

The enzyme catalyses dCTP + H2O + H(+) = dUTP + NH4(+). Its pathway is pyrimidine metabolism; dUMP biosynthesis; dUMP from dCTP (dUTP route): step 1/2. Functionally, catalyzes the deamination of dCTP to dUTP. The protein is dCTP deaminase of Chloroflexus aurantiacus (strain ATCC 29366 / DSM 635 / J-10-fl).